The sequence spans 476 residues: MNFETTIGLEVHVELKTKSKMFSPSPVTYGQEPNTQTNVIDWGFPGVLPSINRGAYQLGIMVGLALHADITRLTHFDRKNYFYPDNPKAYQITQSEKPLGTNGWVEIEVDGKKKKIGIAELHVEEDAGKNQHEDDGYSYVDLNRQGTPLVEIVSKPDITSPEEAYAYLETLRQIVQFTGASDVKMEEGSMRVDTNLSVRPIGQEHFGIKTEIKNLNSFVHVRDGLAFEEKRQQAVLLSGGEVRQETRRWDPDAKETLLMRVKEGADDYRYFPEPDLPPVAVSQKWIDDIQASLPQPPAERRQRYIEDWGIPAYDAGVLTQTKEMSDFFEATVAQGADAKQASNWLMGEVSGFLNAQHVELGQVALTPAHLAGMIKLIGDGTISSKMAKKVFKEIIQHDTDPDKWVHEKGLIQLSDPAKLTPIIDEILDNNQQSIDDFKAGKDRAIGFLVGQIMKQTHGQANPKVVNQILMAEIKQR.

This sequence belongs to the GatB/GatE family. GatB subfamily. Heterotrimer of A, B and C subunits.

It catalyses the reaction L-glutamyl-tRNA(Gln) + L-glutamine + ATP + H2O = L-glutaminyl-tRNA(Gln) + L-glutamate + ADP + phosphate + H(+). The catalysed reaction is L-aspartyl-tRNA(Asn) + L-glutamine + ATP + H2O = L-asparaginyl-tRNA(Asn) + L-glutamate + ADP + phosphate + 2 H(+). Functionally, allows the formation of correctly charged Asn-tRNA(Asn) or Gln-tRNA(Gln) through the transamidation of misacylated Asp-tRNA(Asn) or Glu-tRNA(Gln) in organisms which lack either or both of asparaginyl-tRNA or glutaminyl-tRNA synthetases. The reaction takes place in the presence of glutamine and ATP through an activated phospho-Asp-tRNA(Asn) or phospho-Glu-tRNA(Gln). This Lacticaseibacillus paracasei (strain ATCC 334 / BCRC 17002 / CCUG 31169 / CIP 107868 / KCTC 3260 / NRRL B-441) (Lactobacillus paracasei) protein is Aspartyl/glutamyl-tRNA(Asn/Gln) amidotransferase subunit B.